A 318-amino-acid polypeptide reads, in one-letter code: Homoserine kinase (318 aa).

Position 97–107 (97–107 (PIGSGLGSSAC)) interacts with ATP.

It belongs to the GHMP kinase family. Homoserine kinase subfamily.

The protein resides in the cytoplasm. The catalysed reaction is L-homoserine + ATP = O-phospho-L-homoserine + ADP + H(+). Its pathway is amino-acid biosynthesis; L-threonine biosynthesis; L-threonine from L-aspartate: step 4/5. Catalyzes the ATP-dependent phosphorylation of L-homoserine to L-homoserine phosphate. This chain is Homoserine kinase, found in Aliivibrio salmonicida (strain LFI1238) (Vibrio salmonicida (strain LFI1238)).